Consider the following 376-residue polypeptide: uncharacterized protein (376 aa).

The Lumenal segment spans residues 1 to 280; the sequence is MPIPIIAHIA…RTPGFRRVVS (280 aa). Positions 66, 115, 178, 233, 270, and 272 each coordinate NADP(+). The active-site Lowers pKa of active site Tyr is Lys-233. The chain crosses the membrane as a helical span at residues 281 to 301; sequence FGKVWGLFLYLLLWPFWWLLL. Over 302 to 376 the chain is Cytoplasmic; the sequence is KGTIHGAQSF…KKKKIKKSKK (75 aa).

Belongs to the short-chain dehydrogenases/reductases (SDR) family.

The protein localises to the cytoplasm. It is found in the endoplasmic reticulum membrane. May be involved in lipid metabolism. This is an uncharacterized protein from Schizosaccharomyces pombe (strain 972 / ATCC 24843) (Fission yeast).